We begin with the raw amino-acid sequence, 164 residues long: uncharacterized protein (164 aa).

The first 22 residues, 1–22 (MKTNRSLVVIVSLITATLLLTA), serve as a signal peptide directing secretion. The N-palmitoyl cysteine moiety is linked to residue cysteine 23. A lipid anchor (S-diacylglycerol cysteine) is attached at cysteine 23.

The protein localises to the cell membrane. This is an uncharacterized protein from Escherichia coli (strain K12).